Consider the following 420-residue polypeptide: Ketoreductase sphF (420 aa).

The disordered stretch occupies residues 1–21; the sequence is MLERPSFPRLGAGTRHHRPLG. Residues 29–49 traverse the membrane as a helical segment; the sequence is WLLAFTGISGIAGMMIPYVPW. The interval 275–298 is disordered; the sequence is RQKRSPSPGRHPALGSPPAQLRQD.

Its subcellular location is the membrane. It catalyses the reaction 3-oxopresphingofungin + NADPH + 2 H(+) = presphingofungin + NADP(+). It functions in the pathway secondary metabolite biosynthesis. Ketoreductase; part of the gene cluster that mediates the biosynthesis of sphingofungins, bioactive molecules acting as sphingolipid inhibitors via inhibiting serine palmitoyl transferase (SPT). Within the pathway, sphF catalyzes the reduction of the C-3 ketone of 3-keto-presphingofungin to produce presphingofungin. Sphingofungin biosynthesis starts with the PKS sphB that produces an C18 polyketide precursor 3-hydroxyoctadeca-4,10-dienoyl-ACP containing one delta-6 desaturation and one delta-12 desaturation. The aminoacyl transferase sphA uses the sphB product to produce 3-keto-presphingofungin by adding an aminomalonate molecule. SphF then reduces the C-3 ketone of 3-keto-presphingofungin which leads to presphingofungin. The cytochrome P450 monooxygenase sphH converts presphingofungin into sphingofungin B1 which is further converted to sphingofungin B by the dioxygenase sphC. SphC is also able to convert presphingofungin into sphingofungin B2. The acetyltransferase sphE acetylates sphingofungin B to produce sphingofungin C, but can also convert sphingofungin B1 into sphingofungin C1 and sphingofungin B2 into sphingofungin C2. Finally, sphingofungin C can be spontaneously converted into sphingofungin D. The sequence is that of Ketoreductase sphF from Aspergillus fumigatus (strain CBS 144.89 / FGSC A1163 / CEA10) (Neosartorya fumigata).